The chain runs to 311 residues: Phosphoribosylaminoimidazole-succinocarboxamide synthase (311 aa).

The protein belongs to the SAICAR synthetase family.

It carries out the reaction 5-amino-1-(5-phospho-D-ribosyl)imidazole-4-carboxylate + L-aspartate + ATP = (2S)-2-[5-amino-1-(5-phospho-beta-D-ribosyl)imidazole-4-carboxamido]succinate + ADP + phosphate + 2 H(+). It functions in the pathway purine metabolism; IMP biosynthesis via de novo pathway; 5-amino-1-(5-phospho-D-ribosyl)imidazole-4-carboxamide from 5-amino-1-(5-phospho-D-ribosyl)imidazole-4-carboxylate: step 1/2. The sequence is that of Phosphoribosylaminoimidazole-succinocarboxamide synthase from Aromatoleum aromaticum (strain DSM 19018 / LMG 30748 / EbN1) (Azoarcus sp. (strain EbN1)).